A 105-amino-acid chain; its full sequence is Anti-sigma factor RsrA (105 aa).

Zn(2+) contacts are provided by C11, H37, C41, and C44. The cysteines at positions 11 and 44 are disulfide-linked. The contributes to redox-sensitivity stretch occupies residues K33–K47. Residues Q86–S105 are disordered. Over residues A94–S105 the composition is skewed to low complexity.

This sequence belongs to the zinc-associated anti-sigma factor (ZAS) superfamily. As to quaternary structure, interacts with cognate sigma factor SigR under reducing but not oxiding conditions. Treatment with the thiol-oxidzing agent diamide inhibits the interaction, while incubation with thioredoxin (trxA) stimulates the interaction. Zn(2+) is required as a cofactor. Post-translationally, under oxidizing conditions up to 3 disulfide bonds are formed. A single disulfide bond inhibits binding to SigR. Cys-11 forms a disulfide bond with either Cys-44 (the major bind) or Cys-41 (a minor bond).

A redox-regulated anti-sigma factor for extracytoplasmic function (ECF) sigma factor SigR, and a key sensor of disulfide stress. Holds SigR, its cognate ECF sigma factor, in an inactive form, inhibiting its sigma activity under reducing but not oxidizing conditions; oxidation and reduction of the anti-sigma factor is reversible. Mycothiol (MSH) is competent for reduction of RsrA, allowing it to bind to SigR. In conjunction with its cognate sigma factor SigR may sense the intracellular level of reduced MSH. Probably releases SigR during oxidative stress. This is Anti-sigma factor RsrA (rsrA) from Streptomyces coelicolor (strain ATCC BAA-471 / A3(2) / M145).